A 265-amino-acid polypeptide reads, in one-letter code: Tyrosine protein kinase-interacting protein (265 aa).

Positions 1–14 are enriched in acidic residues; that stretch reads MANEGEEIELTEFP. A disordered region spans residues 1-49; the sequence is MANEGEEIELTEFPETEKERKDEEKLSSCSEETTDTSSSSSSDHVPAPI. The Cytoplasmic segment spans residues 1-238; the sequence is MANEGEEIEL…LKRLENKVNA (238 aa). Residues 15 to 26 are compositionally biased toward basic and acidic residues; the sequence is ETEKERKDEEKL. The segment covering 27–43 has biased composition (low complexity); the sequence is SSCSEETTDTSSSSSSD. A Phosphotyrosine; by host LCK modification is found at Tyr123. The residue at position 136 (Tyr136) is a Phosphotyrosine; by host. Residues 155–164 are CSKH/LBD2; it reads EDLQSFLEKY. The interval 172-192 is disordered; the sequence is KRDLSATWDPGMPTPALPPRP. The tract at residues 183-192 is SH3B/LBD1; it reads MPTPALPPRP. Positions 183 to 192 are enriched in pro residues; sequence MPTPALPPRP. The tract at residues 225–234 is SH3 binding; it reads IVKDLKRLEN. Residues 239-259 form a helical membrane-spanning segment; sequence IICLVVVILAVLLLVTVLSIL. The Extracellular segment spans residues 260-265; sequence HIGMKS.

In terms of assembly, binds host LCK, human WDR48 and human NXF1/TAP. Forms a complex with activated LCK and STAT1 and STAT3. Post-translationally, phosphorylation on Tyr-123 acts as a docking site for the recruitment of STATs 1 and 3.

Its subcellular location is the host cell membrane. Its function is as follows. Plays a critical role in virus induced T-cell transformation. Binds to T-cell-specific tyrosine kinase LCK SH2 and SH3 domains, thereby activating its kinase activity. Once phosphorylated by host LCK, forms a complex with at least STAT 1 and 3, resulting on the phosphorylation of STAT3 and presumably STAT1, and their migration into the nucleus to induce transcription of target genes. Stimulates host ILF3/NF-AT-90 activity. Association with host NXF1/TAP transduces the signal up-regulating surface expression of adhesion molecules as well as activating NF-kappa-B activity. Acts synergistically with StpC to stimulate NF-kappa-B activity and interleukin-2 gene expression. Activation of NF-kappa-B protects lymphocytes from apoptosis, thereby facilitating viral induced cell transformation. May cause down-regulation of host LCK and cell apoptosis when stably overexpressed ex vivo. Interaction with WDR48 induce degradation of T-cell receptor in a lysosome-dependent fashion, when both proteins are overexpressed. The biological effect of this interaction remains controversial since no T-cell receptor degradation is observed in infected cells. In Saimiriine herpesvirus 2 (strain 484) (SaHV-2), this protein is Tyrosine protein kinase-interacting protein.